Reading from the N-terminus, the 333-residue chain is tRNA uridine(34) hydroxylase (333 aa).

The Rhodanese domain occupies 123–217; the sequence is SDPEVVLVDT…YLEEVNKAES (95 aa). The active-site Cysteine persulfide intermediate is Cys177. A compositionally biased stretch (basic and acidic residues) spans 313–327; that stretch reads QKKEALRKQSAEKNK. The segment at 313-333 is disordered; it reads QKKEALRKQSAEKNKAKQANA.

It belongs to the TrhO family.

It catalyses the reaction uridine(34) in tRNA + AH2 + O2 = 5-hydroxyuridine(34) in tRNA + A + H2O. Catalyzes oxygen-dependent 5-hydroxyuridine (ho5U) modification at position 34 in tRNAs. The polypeptide is tRNA uridine(34) hydroxylase (Shewanella oneidensis (strain ATCC 700550 / JCM 31522 / CIP 106686 / LMG 19005 / NCIMB 14063 / MR-1)).